The following is a 409-amino-acid chain: Peptidase T (409 aa).

His78 provides a ligand contact to Zn(2+). Asp80 is a catalytic residue. Asp140 is a binding site for Zn(2+). The active-site Proton acceptor is Glu173. Zn(2+)-binding residues include Glu174, Asp196, and His379.

It belongs to the peptidase M20B family. Zn(2+) serves as cofactor.

The protein localises to the cytoplasm. The catalysed reaction is Release of the N-terminal residue from a tripeptide.. Functionally, cleaves the N-terminal amino acid of tripeptides. This Salmonella paratyphi A (strain ATCC 9150 / SARB42) protein is Peptidase T.